The primary structure comprises 283 residues: NAD kinase (283 aa).

Asp68 functions as the Proton acceptor in the catalytic mechanism. NAD(+)-binding positions include 68-69 (DG), 142-143 (ND), Arg153, Asp172, 183-188 (TAYSLS), and Gln242.

The protein belongs to the NAD kinase family. It depends on a divalent metal cation as a cofactor.

It localises to the cytoplasm. It catalyses the reaction NAD(+) + ATP = ADP + NADP(+) + H(+). Functionally, involved in the regulation of the intracellular balance of NAD and NADP, and is a key enzyme in the biosynthesis of NADP. Catalyzes specifically the phosphorylation on 2'-hydroxyl of the adenosine moiety of NAD to yield NADP. This is NAD kinase from Thermoanaerobacter pseudethanolicus (strain ATCC 33223 / 39E) (Clostridium thermohydrosulfuricum).